A 328-amino-acid polypeptide reads, in one-letter code: Phosphate acyltransferase (328 aa).

Belongs to the PlsX family. As to quaternary structure, homodimer. Probably interacts with PlsY.

The protein resides in the cytoplasm. It catalyses the reaction a fatty acyl-[ACP] + phosphate = an acyl phosphate + holo-[ACP]. It participates in lipid metabolism; phospholipid metabolism. Catalyzes the reversible formation of acyl-phosphate (acyl-PO(4)) from acyl-[acyl-carrier-protein] (acyl-ACP). This enzyme utilizes acyl-ACP as fatty acyl donor, but not acyl-CoA. The polypeptide is Phosphate acyltransferase (Pseudothermotoga lettingae (strain ATCC BAA-301 / DSM 14385 / NBRC 107922 / TMO) (Thermotoga lettingae)).